Consider the following 271-residue polypeptide: uncharacterized protein (271 aa).

This is an uncharacterized protein from Saccharomyces cerevisiae (strain ATCC 204508 / S288c) (Baker's yeast).